Here is a 311-residue protein sequence, read N- to C-terminus: Salutaridine reductase (311 aa).

NADP(+) is bound by residues 21–24, Arg-44, 70–71, and Asn-98; these read NKGI and DV. The substrate site is built by Tyr-129 and Ser-180. NADP(+)-binding positions include Tyr-236, Lys-240, and 267 to 272; that span reads VKTEMN. Tyr-236 functions as the Proton acceptor in the catalytic mechanism. A disulfide bridge links Cys-263 with Cys-305.

The protein belongs to the short-chain dehydrogenases/reductases (SDR) family.

It catalyses the reaction (7S)-salutaridinol + NADP(+) = salutaridine + NADPH + H(+). Its pathway is alkaloid biosynthesis; morphine biosynthesis. With respect to regulation, strong substrate inhibition. Was thought to be due to mutually exclusive productive and non-productive modes of substrate binding in the active site. Alternatively, SALR may undergo significant conformational changes during catalytic turnover. Functionally, short-chain dehydrogenases/reductases involved in biosynthesis of morphinan-type benzylisoquinoline and opiate alkaloids natural products. Catalyzes specifically the stereospecific conversion of salutaridine to salutaridinol. This Papaver somniferum (Opium poppy) protein is Salutaridine reductase.